Reading from the N-terminus, the 177-residue chain is tRNA (cytidine(56)-2'-O)-methyltransferase (177 aa).

Residues Leu84 and 109–113 (GAEKV) contribute to the S-adenosyl-L-methionine site.

Belongs to the aTrm56 family. Homodimer.

It is found in the cytoplasm. The enzyme catalyses cytidine(56) in tRNA + S-adenosyl-L-methionine = 2'-O-methylcytidine(56) in tRNA + S-adenosyl-L-homocysteine + H(+). Its function is as follows. Specifically catalyzes the AdoMet-dependent 2'-O-ribose methylation of cytidine at position 56 in tRNAs. The polypeptide is tRNA (cytidine(56)-2'-O)-methyltransferase (Methanosarcina barkeri (strain Fusaro / DSM 804)).